We begin with the raw amino-acid sequence, 4318 residues long: Cytoplasmic dynein 2 heavy chain 1 (4318 aa).

The tract at residues 1–1658 is stem; the sequence is MPAEDARKEY…IMRMVDAEFQ (1658 aa). Position 147-154 (147-154) interacts with ATP; the sequence is LKSLVRKQ. Coiled coils occupy residues 1328–1354 and 1402–1431; these read DKATIWEQRLADLDEYLQNLNQIQRKW and LRTTLTTLLDQLQRCQKALNEFLEEKRSIL. 4 AAA regions span residues 1659 to 1883, 1951 to 2171, 2261 to 2515, and 2623 to 2871; these read YTYE…VLRG, DAIR…RQGD, ASDF…WVLG, and TFAR…SSSV. ATP is bound at residue 1697–1704; it reads GPAGTGKT. Residues 1959–1986 are a coiled coil; the sequence is EHNLVVMETQVKKALELYEQLRQRMGVV. Residues 1989–1996, 2301–2308, and 2661–2668 each bind ATP; these read GPSGSGKS, GPDGCGKG, and GRSGVGRR. Residues 2888 to 3176 are stalk; the sequence is DVYRRKKQGV…YELEKEQETI (289 aa). Coiled coils occupy residues 2908 to 2989 and 3423 to 3480; these read VAKL…AEIE and QHEK…KTKE. AAA regions lie at residues 3251–3487 and 3699–3914; these read LSTE…TITQ and MTFF…IIDR.

Belongs to the dynein heavy chain family. In terms of assembly, the cytoplasmic dynein complex 2 is probably composed by a heavy chain DYH1B homodimer and a number of light intermediate chains.

It localises to the cytoplasm. It is found in the cytoskeleton. The protein resides in the cilium axoneme. Its subcellular location is the cell membrane. May function as a motor for intraflagellar retrograde transport. Functions in cilia biogenesis. This Tripneustes gratilla (Hawaian sea urchin) protein is Cytoplasmic dynein 2 heavy chain 1 (DYH1B).